The primary structure comprises 139 residues: uncharacterized protein (139 aa).

It to E.coli YebE.

This is an uncharacterized protein from Yersinia enterocolitica.